The chain runs to 151 residues: 3-hydroxyacyl-[acyl-carrier-protein] dehydratase FabZ (151 aa).

The active site involves His-54.

Belongs to the thioester dehydratase family. FabZ subfamily.

Its subcellular location is the cytoplasm. It catalyses the reaction a (3R)-hydroxyacyl-[ACP] = a (2E)-enoyl-[ACP] + H2O. Involved in unsaturated fatty acids biosynthesis. Catalyzes the dehydration of short chain beta-hydroxyacyl-ACPs and long chain saturated and unsaturated beta-hydroxyacyl-ACPs. The polypeptide is 3-hydroxyacyl-[acyl-carrier-protein] dehydratase FabZ (Salmonella agona (strain SL483)).